The chain runs to 260 residues: Adenosylcobinamide-GDP ribazoletransferase (260 aa).

The next 7 membrane-spanning stretches (helical) occupy residues 42 to 62 (PLAG…ANAI), 64 to 84 (LPPL…TGAL), 117 to 137 (FAAL…MAII), 144 to 164 (YALL…LAFW), 192 to 212 (GLGL…VALI), 214 to 234 (ALVL…AKIG), and 240 to 260 (TLGA…VMAL).

This sequence belongs to the CobS family. Mg(2+) is required as a cofactor.

It localises to the cell inner membrane. It carries out the reaction alpha-ribazole + adenosylcob(III)inamide-GDP = adenosylcob(III)alamin + GMP + H(+). The catalysed reaction is alpha-ribazole 5'-phosphate + adenosylcob(III)inamide-GDP = adenosylcob(III)alamin 5'-phosphate + GMP + H(+). It functions in the pathway cofactor biosynthesis; adenosylcobalamin biosynthesis; adenosylcobalamin from cob(II)yrinate a,c-diamide: step 7/7. Functionally, joins adenosylcobinamide-GDP and alpha-ribazole to generate adenosylcobalamin (Ado-cobalamin). Also synthesizes adenosylcobalamin 5'-phosphate from adenosylcobinamide-GDP and alpha-ribazole 5'-phosphate. This chain is Adenosylcobinamide-GDP ribazoletransferase, found in Brucella ovis (strain ATCC 25840 / 63/290 / NCTC 10512).